Reading from the N-terminus, the 190-residue chain is Hypoxanthine/guanine phosphoribosyltransferase (190 aa).

The protein belongs to the purine/pyrimidine phosphoribosyltransferase family. Archaeal HPRT subfamily. As to quaternary structure, homodimer.

Its subcellular location is the cytoplasm. The enzyme catalyses IMP + diphosphate = hypoxanthine + 5-phospho-alpha-D-ribose 1-diphosphate. It carries out the reaction GMP + diphosphate = guanine + 5-phospho-alpha-D-ribose 1-diphosphate. The protein operates within purine metabolism; IMP biosynthesis via salvage pathway; IMP from hypoxanthine: step 1/1. Functionally, catalyzes a salvage reaction resulting in the formation of IMP that is energically less costly than de novo synthesis. The polypeptide is Hypoxanthine/guanine phosphoribosyltransferase (Methanohalobium evestigatum (strain ATCC BAA-1072 / DSM 3721 / NBRC 107634 / OCM 161 / Z-7303)).